Consider the following 282-residue polypeptide: DegV domain-containing protein SpyM3_0586 (282 aa).

Positions 3 to 280 (LAVITDSTAT…EGAIAFGVTP (278 aa)) constitute a DegV domain. Hexadecanoate contacts are provided by Thr-61 and Ser-94.

Its function is as follows. May bind long-chain fatty acids, such as palmitate, and may play a role in lipid transport or fatty acid metabolism. The chain is DegV domain-containing protein SpyM3_0586 from Streptococcus pyogenes serotype M3 (strain ATCC BAA-595 / MGAS315).